A 501-amino-acid polypeptide reads, in one-letter code: Sodium-coupled neutral amino acid symporter 2 (501 aa).

The interval 1-26 is disordered; the sequence is MSSAEMGKFDISPDEDSSSYSSNSND. At 1-77 the chain is on the cytoplasmic side; that stretch reads MSSAEMGKFD…HPGTTSFGMS (77 aa). The tract at residues 1–97 is regulates protein turnover upon amino acid deprivation; it reads MSSAEMGKFD…SGILGLSYAM (97 aa). Residues 78–97 traverse the membrane as a helical segment; it reads VFNLSNAIVGSGILGLSYAM. A Na(+)-binding site is contributed by Asn-83. The Extracellular segment spans residues 98–103; the sequence is ANTGIA. The helical transmembrane segment at 104-124 threads the bilayer; that stretch reads LFVILLLVVSILSLYSVHLLL. The Cytoplasmic portion of the chain corresponds to 125-159; sequence KTANEGGSLLYEQLGMKAFGMPGKLAASGSITMQN. A helical transmembrane segment spans residues 160-178; sequence IGAMSSYLFIVKYELPLVI. Over 179 to 189 the chain is Extracellular; sequence KTFMNIEENAG. Residues 190 to 210 form a helical membrane-spanning segment; that stretch reads HWYLNGDYLVLLVSVILILPL. Residues 211–218 lie on the Cytoplasmic side of the membrane; sequence SLLKNLGY. A helical membrane pass occupies residues 219-239; it reads LGYTSGFSLLCMVFFLIVVIW. At 240-287 the chain is on the extracellular side; it reads KMFQIPCPMESDIINATLINATLAPFADENITISDACKPEYFIFNSQT. A disulfide bridge connects residues Cys-246 and Cys-276. 2 N-linked (GlcNAc...) asparagine glycosylation sites follow: Asn-254 and Asn-259. The helical transmembrane segment at 288–308 threads the bilayer; that stretch reads VYAVPILTFSFVCHPAILPIY. The Cytoplasmic portion of the chain corresponds to 309–324; sequence EELKSRSRKRMMNVSY. A helical membrane pass occupies residues 325 to 345; that stretch reads VSFFAMFLMYLLAALFGYLTF. At 346-366 the chain is on the extracellular side; sequence YGRVESELLHTYSAFLGADIL. Residues 367 to 387 traverse the membrane as a helical segment; the sequence is LLIVRLAVLMAVTLTVPVVIF. Thr-381 is a Na(+) binding site. At 388–408 the chain is on the cytoplasmic side; sequence PIRSSVTQLLWAGKEFSWWRH. Residues 409 to 429 form a helical membrane-spanning segment; it reads CSITVVLLAFTNVLVIFVPTI. The Extracellular portion of the chain corresponds to 430–431; that stretch reads RD. The helical transmembrane segment at 432-452 threads the bilayer; it reads IFGFIGASAAAMLIFILPSAF. Residues 453–467 are Cytoplasmic-facing; the sequence is YIKLVKKEPMKSVQK. Residues 468–490 traverse the membrane as a helical segment; it reads IGAALFFLSGILVMTGCMTLIIL. The Extracellular segment spans residues 491-501; that stretch reads DWIHTDASDGH.

The protein belongs to the amino acid/polyamine transporter 2 family.

The protein localises to the cell membrane. It catalyses the reaction L-alanine(in) + Na(+)(in) = L-alanine(out) + Na(+)(out). The catalysed reaction is glycine(in) + Na(+)(in) = glycine(out) + Na(+)(out). The enzyme catalyses L-serine(in) + Na(+)(in) = L-serine(out) + Na(+)(out). It carries out the reaction L-proline(in) + Na(+)(in) = L-proline(out) + Na(+)(out). It catalyses the reaction L-methionine(in) + Na(+)(in) = L-methionine(out) + Na(+)(out). The catalysed reaction is L-histidine(in) + Na(+)(in) = L-histidine(out) + Na(+)(out). The enzyme catalyses L-asparagine(in) + Na(+)(in) = L-asparagine(out) + Na(+)(out). It carries out the reaction L-glutamine(in) + Na(+)(in) = L-glutamine(out) + Na(+)(out). It catalyses the reaction L-threonine(in) + Na(+)(in) = L-threonine(out) + Na(+)(out). The catalysed reaction is L-leucine(in) + Na(+)(in) = L-leucine(out) + Na(+)(out). The enzyme catalyses L-phenylalanine(in) + Na(+)(in) = L-phenylalanine(out) + Na(+)(out). Its activity is regulated as follows. Inhibited by N-methyl-D-glucamine. Inhibited by choline. Allosteric regulation of sodium ions binding by pH. Functionally, symporter that cotransports neutral amino acids and sodium ions from the extracellular to the intracellular side of the cell membrane. The transport is pH-sensitive, Li(+)-intolerant, electrogenic, driven by the Na(+) electrochemical gradient and cotransports of neutral amino acids and sodium ions with a stoichiometry of 1:1. In Gallus gallus (Chicken), this protein is Sodium-coupled neutral amino acid symporter 2.